The sequence spans 143 residues: Small ribosomal subunit protein uS12B (143 aa).

Pro62 carries the post-translational modification 3,4-dihydroxyproline.

Belongs to the universal ribosomal protein uS12 family. In terms of assembly, component of the small ribosomal subunit (SSU). Mature yeast ribosomes consist of a small (40S) and a large (60S) subunit. The 40S small subunit contains 1 molecule of ribosomal RNA (18S rRNA) and at least 33 different proteins. The large 60S subunit contains 3 rRNA molecules (25S, 5.8S and 5S rRNA) and at least 46 different proteins. Post-translationally, hydroxylation at Pro-62 affects translation termination efficiency.

The protein resides in the cytoplasm. Its subcellular location is the nucleus. The protein localises to the nucleolus. Functionally, component of the ribosome, a large ribonucleoprotein complex responsible for the synthesis of proteins in the cell. The small ribosomal subunit (SSU) binds messenger RNAs (mRNAs) and translates the encoded message by selecting cognate aminoacyl-transfer RNA (tRNA) molecules. The large subunit (LSU) contains the ribosomal catalytic site termed the peptidyl transferase center (PTC), which catalyzes the formation of peptide bonds, thereby polymerizing the amino acids delivered by tRNAs into a polypeptide chain. The nascent polypeptides leave the ribosome through a tunnel in the LSU and interact with protein factors that function in enzymatic processing, targeting, and the membrane insertion of nascent chains at the exit of the ribosomal tunnel. The polypeptide is Small ribosomal subunit protein uS12B (rps2302) (Schizosaccharomyces pombe (strain 972 / ATCC 24843) (Fission yeast)).